The following is a 1024-amino-acid chain: Carbamoyl phosphate synthase large chain (1024 aa).

A carboxyphosphate synthetic domain region spans residues 1–402 (MPKRTDLQTI…SLQKALRSTE (402 aa)). Residues Arg-129, Arg-169, Gly-175, Gly-176, Glu-208, Ile-210, Glu-215, Gly-241, Val-242, His-243, Gln-285, and Glu-299 each contribute to the ATP site. The ATP-grasp 1 domain maps to 133 to 328 (QAAMKKIGVE…IAKIAALLAV (196 aa)). Mg(2+) is bound by residues Gln-285, Glu-299, and Asn-301. Mn(2+)-binding residues include Gln-285, Glu-299, and Asn-301. Residues 403 to 546 (GDIRGVYAEM…YSTYEWEDEV (144 aa)) form an oligomerization domain region. Positions 547–929 (APTDKPKVVI…AFYRAQLGAK (383 aa)) are carbamoyl phosphate synthetic domain. Residues 671–863 (NALCERLGLP…LAKSAARIAA (193 aa)) form the ATP-grasp 2 domain. ATP-binding residues include Arg-707, Gln-747, Leu-749, Glu-754, Gly-779, Val-780, His-781, Ser-782, Gln-822, and Glu-834. 3 residues coordinate Mg(2+): Gln-822, Glu-834, and Asn-836. Residues Gln-822, Glu-834, and Asn-836 each contribute to the Mn(2+) site. The MGS-like domain maps to 930–1024 (NYLPLEGTAL…GVRSLQEWVK (95 aa)). The segment at 930–1024 (NYLPLEGTAL…GVRSLQEWVK (95 aa)) is allosteric domain.

Belongs to the CarB family. In terms of assembly, composed of two chains; the small (or glutamine) chain promotes the hydrolysis of glutamine to ammonia, which is used by the large (or ammonia) chain to synthesize carbamoyl phosphate. Tetramer of heterodimers (alpha,beta)4. The cofactor is Mg(2+). Mn(2+) serves as cofactor.

The catalysed reaction is hydrogencarbonate + L-glutamine + 2 ATP + H2O = carbamoyl phosphate + L-glutamate + 2 ADP + phosphate + 2 H(+). The enzyme catalyses hydrogencarbonate + NH4(+) + 2 ATP = carbamoyl phosphate + 2 ADP + phosphate + 2 H(+). The protein operates within amino-acid biosynthesis; L-arginine biosynthesis; carbamoyl phosphate from bicarbonate: step 1/1. Its pathway is pyrimidine metabolism; UMP biosynthesis via de novo pathway; (S)-dihydroorotate from bicarbonate: step 1/3. In terms of biological role, large subunit of the glutamine-dependent carbamoyl phosphate synthetase (CPSase). CPSase catalyzes the formation of carbamoyl phosphate from the ammonia moiety of glutamine, carbonate, and phosphate donated by ATP, constituting the first step of 2 biosynthetic pathways, one leading to arginine and/or urea and the other to pyrimidine nucleotides. The large subunit (synthetase) binds the substrates ammonia (free or transferred from glutamine from the small subunit), hydrogencarbonate and ATP and carries out an ATP-coupled ligase reaction, activating hydrogencarbonate by forming carboxy phosphate which reacts with ammonia to form carbamoyl phosphate. This is Carbamoyl phosphate synthase large chain from Deinococcus radiodurans (strain ATCC 13939 / DSM 20539 / JCM 16871 / CCUG 27074 / LMG 4051 / NBRC 15346 / NCIMB 9279 / VKM B-1422 / R1).